Here is a 341-residue protein sequence, read N- to C-terminus: Hyaluronan and proteoglycan link protein 2 (341 aa).

The first 27 residues, 1-27, serve as a signal peptide directing secretion; it reads MPSRIPLPAFCCFLLPWAFTSFHKALG. The region spanning 35–143 is the Ig-like V-type domain; it reads PHYLLPPIHE…GIEDESVALT (109 aa). Intrachain disulfides connect Cys-58/Cys-129, Cys-171/Cys-241, Cys-195/Cys-216, Cys-266/Cys-337, and Cys-291/Cys-312. Link domains are found at residues 149–243 and 246–339; these read VVFP…FCFT and LAGQ…YCYA.

This sequence belongs to the HAPLN family. Brain. Predominantly expressed by neurons. Colocalizes with versican V2 in developing and adult cerebellar white matter and at the nodes of Ranvier.

It is found in the secreted. It localises to the extracellular space. The protein localises to the extracellular matrix. In terms of biological role, mediates a firm binding of versican V2 to hyaluronic acid. May play a pivotal role in the formation of the hyaluronan-associated matrix in the central nervous system (CNS) which facilitates neuronal conduction and general structural stabilization. Binds to hyaluronic acid. This Mus musculus (Mouse) protein is Hyaluronan and proteoglycan link protein 2 (Hapln2).